Consider the following 226-residue polypeptide: Leucyl/phenylalanyl-tRNA--protein transferase (226 aa).

This sequence belongs to the L/F-transferase family.

It localises to the cytoplasm. It carries out the reaction N-terminal L-lysyl-[protein] + L-leucyl-tRNA(Leu) = N-terminal L-leucyl-L-lysyl-[protein] + tRNA(Leu) + H(+). The enzyme catalyses N-terminal L-arginyl-[protein] + L-leucyl-tRNA(Leu) = N-terminal L-leucyl-L-arginyl-[protein] + tRNA(Leu) + H(+). The catalysed reaction is L-phenylalanyl-tRNA(Phe) + an N-terminal L-alpha-aminoacyl-[protein] = an N-terminal L-phenylalanyl-L-alpha-aminoacyl-[protein] + tRNA(Phe). Functions in the N-end rule pathway of protein degradation where it conjugates Leu, Phe and, less efficiently, Met from aminoacyl-tRNAs to the N-termini of proteins containing an N-terminal arginine or lysine. This Pseudomonas fluorescens (strain SBW25) protein is Leucyl/phenylalanyl-tRNA--protein transferase.